The sequence spans 161 residues: Beta-lactoglobulin-1 (161 aa).

Intrachain disulfides connect C66–C159 and C106–C119.

This sequence belongs to the calycin superfamily. Lipocalin family. In terms of assembly, monomer. Synthesized in mammary gland and secreted in milk.

It localises to the secreted. Its function is as follows. Primary component of whey, it binds retinol and is probably involved in the transport of that molecule. The protein is Beta-lactoglobulin-1 (LGB1) of Canis lupus familiaris (Dog).